We begin with the raw amino-acid sequence, 131 residues long: Small ribosomal subunit protein uS8 (131 aa).

The protein belongs to the universal ribosomal protein uS8 family. In terms of assembly, part of the 30S ribosomal subunit. Contacts proteins S5 and S12.

Functionally, one of the primary rRNA binding proteins, it binds directly to 16S rRNA central domain where it helps coordinate assembly of the platform of the 30S subunit. The protein is Small ribosomal subunit protein uS8 of Nitrosomonas eutropha (strain DSM 101675 / C91 / Nm57).